The sequence spans 564 residues: Proline--tRNA ligase (564 aa).

It belongs to the class-II aminoacyl-tRNA synthetase family. ProS type 1 subfamily. Homodimer.

It is found in the cytoplasm. The catalysed reaction is tRNA(Pro) + L-proline + ATP = L-prolyl-tRNA(Pro) + AMP + diphosphate. Its function is as follows. Catalyzes the attachment of proline to tRNA(Pro) in a two-step reaction: proline is first activated by ATP to form Pro-AMP and then transferred to the acceptor end of tRNA(Pro). As ProRS can inadvertently accommodate and process non-cognate amino acids such as alanine and cysteine, to avoid such errors it has two additional distinct editing activities against alanine. One activity is designated as 'pretransfer' editing and involves the tRNA(Pro)-independent hydrolysis of activated Ala-AMP. The other activity is designated 'posttransfer' editing and involves deacylation of mischarged Ala-tRNA(Pro). The misacylated Cys-tRNA(Pro) is not edited by ProRS. This chain is Proline--tRNA ligase, found in Sulfurihydrogenibium sp. (strain YO3AOP1).